The following is a 760-amino-acid chain: Prolyl endopeptidase (760 aa).

Active-site charge relay system residues include Ser-609, Asp-693, and His-730.

It belongs to the peptidase S9A family.

The protein resides in the cytoplasm. It carries out the reaction Hydrolysis of Pro-|-Xaa &gt;&gt; Ala-|-Xaa in oligopeptides.. With respect to regulation, inhibited by chymostatin, Boc-Glu(NHO-Bz)-Pyrrolidide, Z-Pro-L-prolinal dimethyacetal and the peptide H-H-L-P-P-P-V-OH. Functionally, cleaves peptide bonds on the C-terminal side of prolyl residues within peptides that are up to approximately 30 amino acids long. The chain is Prolyl endopeptidase (prep) from Dictyostelium discoideum (Social amoeba).